A 478-amino-acid chain; its full sequence is Ribosomal RNA small subunit methyltransferase F (478 aa).

Residues 123 to 129, glutamate 147, aspartate 174, and aspartate 192 contribute to the S-adenosyl-L-methionine site; that span reads AAAPGSK. The Nucleophile role is filled by cysteine 245.

This sequence belongs to the class I-like SAM-binding methyltransferase superfamily. RsmB/NOP family.

It is found in the cytoplasm. The catalysed reaction is cytidine(1407) in 16S rRNA + S-adenosyl-L-methionine = 5-methylcytidine(1407) in 16S rRNA + S-adenosyl-L-homocysteine + H(+). Specifically methylates the cytosine at position 1407 (m5C1407) of 16S rRNA. This is Ribosomal RNA small subunit methyltransferase F from Vibrio campbellii (strain ATCC BAA-1116).